A 3230-amino-acid chain; its full sequence is Helicase SRCAP (3230 aa).

The tract at residues 1–71 is disordered; the sequence is MQSSPSPAHP…GPPDGATVPL (71 aa). A compositionally biased stretch (low complexity) spans 26–41; sequence GSNPVSPASSSSPASS. One can recognise an HSA domain in the interval 124-196; it reads LPKVPEPPRP…EQAKLRRIAS (73 aa). 2 disordered regions span residues 253-547 and 559-581; these read QPLT…EEDD and EEQSEADAGSGPPTPGPTTLGPK. Positions 257 to 273 are enriched in low complexity; that stretch reads SSKAGSSPCLGSSSAAS. Positions 283–313 are enriched in acidic residues; the sequence is DDEDGDFQPQEDEEEDDEETIEVEEQQEGND. The span at 315-329 shows a compositional bias: basic and acidic residues; sequence EAQRREIELLRREGE. Over residues 337–356 the composition is skewed to low complexity; that stretch reads RSLPPQLLEGPSSPSQTPSS. Residues 397-425 are compositionally biased toward acidic residues; sequence DEDDEEFTANEEEAEDEEDTIAAEEQLEG. The span at 426–441 shows a compositional bias: basic and acidic residues; the sequence is EVDHAMELSELAREGE. Composition is skewed to acidic residues over residues 462 to 490, 503 to 517, and 524 to 533; these read SEDEDEDEVDANSSDCEPEGPVEAEEPPQ, RSEDEEDEHSEEEET, and EESESEESED. Positions 630-795 constitute a Helicase ATP-binding domain; that stretch reads VTMYEKKLNG…WSLMHFLMPH (166 aa). 643-650 is a binding site for ATP; the sequence is DEMGLGKT. Disordered regions lie at residues 1017 to 1045, 1058 to 1125, and 1138 to 1166; these read APLGPVPVRPPPGPELSAQPTPGPVPQVL, PPLI…PGSS, and TFPPAAATTTSTTTATATTTAVPAPTPAP. 2 stretches are compositionally biased toward pro residues: residues 1018–1030 and 1058–1076; these read PLGPVPVRPPPGP and PPLIPASRPPGPVLLPPLQ. Residues 1093–1107 are compositionally biased toward low complexity; it reads LSGTSRPPTPTLSLK. The segment covering 1108-1123 has biased composition (pro residues); that stretch reads PTPPAPVRLSPAPPPG. Residues 1138–1160 show a composition bias toward low complexity; the sequence is TFPPAAATTTSTTTATATTTAVP. Residue serine 1172 is modified to Phosphoserine. Disordered stretches follow at residues 1320–1366, 1406–1425, 1629–1760, and 1839–1893; these read GLTP…APMP, SLPGPASSPMPIPNSSPLAS, VPVM…ASPV, and SRLP…EEKR. Pro residues predominate over residues 1323–1336; the sequence is PVPPLAPAPRPPSS. The span at 1337–1360 shows a compositional bias: low complexity; the sequence is GLPAVLNPRPTLTPGRLPTPTLGT. Low complexity predominate over residues 1675 to 1691; the sequence is PASTQTLALAPALAPTL. The segment covering 1692-1733 has biased composition (polar residues); it reads GGSSPSQTLSLGTGNPQGPFPTQTLSLTPASSLVPTPAQTLS. Residues 1750-1760 are compositionally biased toward pro residues; that stretch reads PAPPLAPASPV. Residues 2044 to 2197 enclose the Helicase C-terminal domain; it reads KLQTLAVLLR…DMAIEGGNFT (154 aa). Disordered stretches follow at residues 2214 to 2233, 2271 to 2298, 2327 to 2453, 2564 to 2583, 2598 to 3081, and 3095 to 3230; these read LEEPSSSSVPSAPEEEEETV, FNENDGFPAGEGEEAGRPGAEDEEMSRA, VSRE…APAA, LELASVASSETSSLSLVPPK, KNLS…GRKS, and DLAD…KAKT. Over residues 2215–2225 the composition is skewed to low complexity; that stretch reads EEPSSSSVPSA. 3 stretches are compositionally biased toward basic and acidic residues: residues 2284–2298, 2327–2358, and 2386–2403; these read EAGRPGAEDEEMSRA, VSREELKQAEEQVEAARKDLDQAKEEVFRLPQ, and KAPERPGTRVSERLRGAR. The span at 2438–2448 shows a compositional bias: pro residues; that stretch reads RPAPRPRPTPA. Low complexity-rich tracts occupy residues 2564–2579 and 2600–2611; these read LELASVASSETSSLSL and LSLTPSAPSLTL. Over residues 2669 to 2679 the composition is skewed to basic and acidic residues; it reads EADRTSEELTE. The span at 2694-2712 shows a compositional bias: low complexity; sequence VTAEVAAPSTSSSATSSPE. The span at 2782-2794 shows a compositional bias: polar residues; sequence SETSASPGSPSVR. A compositionally biased stretch (low complexity) spans 2807 to 2817; it reads GPCEAAPSSSL. The segment covering 2856 to 2868 has biased composition (basic residues); sequence VKRRRGRPPKKNR. Positions 2857-2869 form a DNA-binding region, a.T hook 1; that stretch reads KRRRGRPPKKNRS. The span at 2913-2926 shows a compositional bias: pro residues; the sequence is IPGPQPLGPQPVHR. Residues 2936–2948 constitute a DNA-binding region (a.T hook 2); it reads KRRRGRPPKARDL. The span at 2953–2965 shows a compositional bias: polar residues; it reads TISSAGDGNSESR. Residues 2967–2982 are compositionally biased toward pro residues; sequence QPPPHPSPLTPLPPLL. The segment covering 2983-3002 has biased composition (low complexity); the sequence is VCPTATVANTVTTVTISTSP. Residues 3004 to 3016 constitute a DNA-binding region (a.T hook 3); that stretch reads KRKRGRPPKNPPS. Residues 3011–3020 show a composition bias toward pro residues; the sequence is PKNPPSPRPS. The segment covering 3044–3053 has biased composition (low complexity); it reads PQGQGESEGS. Residues 3168–3184 show a composition bias toward acidic residues; that stretch reads SVEESEAEASGEEEEGD.

The protein belongs to the SNF2/RAD54 helicase family. SWR1 subfamily. Interacts with CREBBP and EP300. May be part of a complex containing SRCAP, CREBBP, CARM1 and GRIP1. Component of the chromatin-remodeling SRCAP complex composed of at least SRCAP, DMAP1, RUVBL1, RUVBL2, ACTL6A, YEATS4, VPS72, ACTR6 and ZNHIT1. Component of a NuA4-related complex which contains EP400, TRRAP/PAF400, SRCAP, BRD8/SMAP, EPC1, DMAP1/DNMAP1, RUVBL1/TIP49, RUVBL2, actin, ACTL6A/BAF53A, VPS72 and YEATS4/GAS41. In terms of assembly, (Microbial infection) Interacts with hepatitis C virus (HCV) NS5A. As to quaternary structure, (Microbial infection) Interacts with human adenovirus 2 DBP.

Its subcellular location is the nucleus. Functionally, catalytic component of the SRCAP complex which mediates the ATP-dependent exchange of histone H2AZ/H2B dimers for nucleosomal H2A/H2B, leading to transcriptional regulation of selected genes by chromatin remodeling. Acts as a coactivator for CREB-mediated transcription, steroid receptor-mediated transcription, and Notch-mediated transcription. The chain is Helicase SRCAP (SRCAP) from Homo sapiens (Human).